The primary structure comprises 189 residues: Putative nucleotidase BC_3386 (189 aa).

It belongs to the 5'(3')-deoxyribonucleotidase family.

The chain is Putative nucleotidase BC_3386 from Bacillus cereus (strain ATCC 14579 / DSM 31 / CCUG 7414 / JCM 2152 / NBRC 15305 / NCIMB 9373 / NCTC 2599 / NRRL B-3711).